The following is a 1512-amino-acid chain: DNA polymerase (1512 aa).

It belongs to the DNA polymerase type-B family.

Its subcellular location is the host nucleus. The catalysed reaction is DNA(n) + a 2'-deoxyribonucleoside 5'-triphosphate = DNA(n+1) + diphosphate. This is DNA polymerase (57/58) from Ictalurid herpesvirus 1 (strain Auburn) (IcHV-1).